Here is a 576-residue protein sequence, read N- to C-terminus: High-affinity choline transporter 1 (576 aa).

The chain crosses the membrane as a helical span at residues 6-26 (GIVAIVFFYVLILVVGIWAGR). The Cytoplasmic portion of the chain corresponds to 27-51 (KSKSSKELESEAGAATEEVMLAGRN). A helical transmembrane segment spans residues 52 to 72 (IGTLVGIFTMTATWVGGAYIN). Over 73 to 82 (GTAEALYNGG) the chain is Extracellular. A helical transmembrane segment spans residues 83–103 (LLGCQAPVGYAISLVMGGLLF). The Cytoplasmic portion of the chain corresponds to 104–126 (AKKMREEGYITMLDPFQHKYGQR). Residues 127–147 (IGGLMYVPALLGETFWTAAIL) traverse the membrane as a helical segment. The Extracellular segment spans residues 148–165 (SALGATLSVILGIDMNAS). Residues 166–186 (VTLSACIAVFYTFTGGYYAVA) traverse the membrane as a helical segment. Residues 187–192 (YTDVVQ) are Cytoplasmic-facing. Residues 193-213 (LFCIFVGLWVCVPAAMVHDGA) form a helical membrane-spanning segment. At 214 to 233 (KDISRNAGDWIGEIGGFKET) the chain is on the extracellular side. Residues 234-254 (SLWIDCMLLLVFGGIPWQVYF) traverse the membrane as a helical segment. Residues 255–270 (QRVLSSKTAHGAQTLS) are Cytoplasmic-facing. The chain crosses the membrane as a helical span at residues 271–291 (FVAGVGCILMAIPPALIGAIA). Residues 292–319 (RNTDWRMTDYSPWNNGTKVESIPPDKRN) lie on the Extracellular side of the membrane. A glycan (N-linked (GlcNAc...) asparagine) is linked at Asn-306. A helical transmembrane segment spans residues 320 to 340 (MVVPLVFQYLTPRWVAFIGLG). Over 341–378 (AVSAAVMSSADSSVLSAASMFAHNIWKLTIRPHASEKE) the chain is Cytoplasmic. The helical transmembrane segment at 379 to 399 (VIIVMRIAIICVGIMATIMAL) threads the bilayer. The Extracellular segment spans residues 400 to 408 (TIQSIYGLW). The chain crosses the membrane as a helical span at residues 409-429 (YLCADLVYVILFPQLLCVVYM). Over 430–437 (PRSNTYGS) the chain is Cytoplasmic. A helical membrane pass occupies residues 438-458 (LAGYAVGLVLRLIGGEPLVSL). Topologically, residues 459–478 (PAFFHYPMYTDGVQYFPFRT) are extracellular. A helical transmembrane segment spans residues 479 to 499 (TAMLSSMATIYIVSIQSEKLF). Residues 500 to 576 (KSGRLSPEWD…DQSYYSTNSN (77 aa)) lie on the Cytoplasmic side of the membrane. Residues 541 to 576 (APNGTPAPVHPNQQPSDENTLLHPYSDQSYYSTNSN) form a disordered region. The segment covering 566–576 (SDQSYYSTNSN) has biased composition (polar residues).

The protein belongs to the sodium:solute symporter (SSF) (TC 2.A.21) family. As to expression, detected in the nervous system, including the nerve ring and cholinergic motor neurons of the ventral nerve cord.

It localises to the membrane. Functionally, imports choline from the extracellular space to the neuron with high affinity. Choline uptake is the rate-limiting step in acetylcholine synthesis. Sodium ion and chloride ion dependent. The sequence is that of High-affinity choline transporter 1 (cho-1) from Caenorhabditis elegans.